The following is a 304-amino-acid chain: HPr kinase/phosphorylase (304 aa).

Active-site residues include His136 and Lys157. ATP is bound at residue 151–158; sequence GESGIGKS. Ser158 provides a ligand contact to Mg(2+). Catalysis depends on Asp175, which acts as the Proton acceptor; for phosphorylation activity. Proton donor; for dephosphorylation activity. The important for the catalytic mechanism of both phosphorylation and dephosphorylation stretch occupies residues 198-207; it reads LEVRGIGIID. Glu199 lines the Mg(2+) pocket. Arg240 is a catalytic residue. The segment at 261-266 is important for the catalytic mechanism of dephosphorylation; the sequence is PVRPGR.

It belongs to the HPrK/P family. In terms of assembly, homohexamer. Mg(2+) serves as cofactor.

It carries out the reaction [HPr protein]-L-serine + ATP = [HPr protein]-O-phospho-L-serine + ADP + H(+). The catalysed reaction is [HPr protein]-O-phospho-L-serine + phosphate + H(+) = [HPr protein]-L-serine + diphosphate. Its function is as follows. Catalyzes the ATP- as well as the pyrophosphate-dependent phosphorylation of a specific serine residue in HPr, a phosphocarrier protein of the phosphoenolpyruvate-dependent sugar phosphotransferase system (PTS). HprK/P also catalyzes the pyrophosphate-producing, inorganic phosphate-dependent dephosphorylation (phosphorolysis) of seryl-phosphorylated HPr (P-Ser-HPr). The two antagonistic activities of HprK/P are regulated by several intracellular metabolites, which change their concentration in response to the absence or presence of rapidly metabolisable carbon sources (glucose, fructose, etc.) in the growth medium. Therefore, by controlling the phosphorylation state of HPr, HPrK/P is a sensor enzyme that plays a major role in the regulation of carbon metabolism and sugar transport: it mediates carbon catabolite repression (CCR), and regulates PTS-catalyzed carbohydrate uptake and inducer exclusion. This is HPr kinase/phosphorylase from Clostridium botulinum (strain Alaska E43 / Type E3).